A 504-amino-acid chain; its full sequence is MHWSESLLKDVSGDQRISTGISPSGPIHIGNMREILTGDIIYKEALKLGIKASFIYLCDDMDPLRKVYPFLPGSYERYVGHPLSMIPAPDGDKTYSEYFLEPFKETIDKIDVRPEIISTTSLYKNGVLSRAIDIAMNNREKIKNILNSIGNYKITGDWYPYEPVCKSCGRINTTTVISYNYPYAEYKCKCGYTGKADIRTDDGKMPWRVEWPAKWFSLHVTIEPFGKDHGAAGGSYDTGKAIASDIFNINPPLPLLYERIFLKGKGVMHSSTGVVIPASEMIKFSPPEIIRFLIAKNNPGRHIDFDPGPGLLNLIDEYEKYERAYFGLDSVKDDDYKEVYELSRLKILKEPEKITFRHIVTLVQIYNNNDALLSALKRSGYEKDYIDDYIMNEIDTARYWLEKYAPPEMKFSLTDENINLNDDERKIVNEFLENIDNIEWSPDSIHNYVYDIIGRSKMRPQDAFAVFYKILIGRSRGPRLGYFIYNLGREYIIKRFSSILAETF.

A 'HIGH' region motif is present at residues 23–31; sequence PSGPIHIGN.

This sequence belongs to the class-I aminoacyl-tRNA synthetase family.

The protein localises to the cytoplasm. The catalysed reaction is tRNA(Lys) + L-lysine + ATP = L-lysyl-tRNA(Lys) + AMP + diphosphate. This Picrophilus torridus (strain ATCC 700027 / DSM 9790 / JCM 10055 / NBRC 100828 / KAW 2/3) protein is Lysine--tRNA ligase.